We begin with the raw amino-acid sequence, 455 residues long: Gamma-aminobutyric acid receptor subunit alpha-1 (455 aa).

The signal sequence occupies residues 1–27 (MKKSRGLSDYLWAWTLILSTLSGRSYG). At 28-252 (QPSQDELKDN…FHLKRKIGYF (225 aa)) the chain is on the extracellular side. N37 carries N-linked (GlcNAc...) asparagine glycosylation. R93 lines the 4-aminobutanoate pocket. An N-linked (GlcNAc...) asparagine glycan is attached at N137. T156 lines the 4-aminobutanoate pocket. A disulfide bridge links C165 with C179. The chain crosses the membrane as a helical span at residues 253–273 (VIQTYLPCIMTVILSQVSFWL). Over 274-278 (NRESV) the chain is Cytoplasmic. Residues 279-300 (PARTVFGVTTVLTMTTLSISAR) traverse the membrane as a helical segment. The Extracellular portion of the chain corresponds to 301-310 (NSLPKVAYAT). The chain crosses the membrane as a helical span at residues 311-332 (AMDWFIAVCYAFVFSALIEFAT). The Cytoplasmic segment spans residues 333–420 (VNYFTKRGYA…TFNSVSKIDR (88 aa)). The helical transmembrane segment at 421–440 (LSRIAFPLLFGIFNLVYWAT) threads the bilayer. The Extracellular segment spans residues 441-455 (YLNREPQLKAPTPHQ).

The protein belongs to the ligand-gated ion channel (TC 1.A.9) family. Gamma-aminobutyric acid receptor (TC 1.A.9.5) subfamily. GABRA1 sub-subfamily. In terms of assembly, heteropentamer, formed by a combination of alpha (GABRA1-6), beta (GABRB1-3), gamma (GABRG1-3), delta (GABRD), epsilon (GABRE), rho (GABRR1-3), pi (GABRP) and theta (GABRQ) subunits, each subunit exhibiting distinct physiological and pharmacological properties. Interacts with UBQLN1. Interacts with TRAK1. Interacts with KIF21B. Identified in a complex of 720 kDa composed of LHFPL4, NLGN2, GABRA1, GABRB2, GABRG2 and GABRB3. Interacts with LHFPL4. Interacts with NLGN2. Interacts with SHISA7; interaction leads to the regulation of GABA(A) receptor trafficking, channel deactivation kinetics and pharmacology. Post-translationally, glycosylated. As to expression, expressed in the cerebellum.

Its subcellular location is the postsynaptic cell membrane. It localises to the cell membrane. The protein resides in the cytoplasmic vesicle membrane. It catalyses the reaction chloride(in) = chloride(out). Its activity is regulated as follows. Allosterically activated by benzodiazepines, the neuroanesthetic alphaxalone and pentobarbital. Inhibited by the antagonist bicuculline. Potentiated by histamine. Its function is as follows. Alpha subunit of the heteropentameric ligand-gated chloride channel gated by Gamma-aminobutyric acid (GABA), a major inhibitory neurotransmitter in the brain. GABA-gated chloride channels, also named GABA(A) receptors (GABAAR), consist of five subunits arranged around a central pore and contain GABA active binding site(s) located at the alpha and beta subunit interface(s). When activated by GABA, GABAARs selectively allow the flow of chloride anions across the cell membrane down their electrochemical gradient. Alpha-1/GABRA1-containing GABAARs are largely synaptic. Chloride influx into the postsynaptic neuron following GABAAR opening decreases the neuron ability to generate a new action potential, thereby reducing nerve transmission. GABAARs containing alpha-1 and beta-2 or -3 subunits exhibit synaptogenic activity; the gamma-2 subunit being necessary but not sufficient to induce rapid synaptic contacts formation. GABAARs function also as histamine receptor where histamine binds at the interface of two neighboring beta subunits and potentiates GABA response. GABAARs containing alpha, beta and epsilon subunits also permit spontaneous chloride channel activity while preserving the structural information required for GABA-gated openings. Alpha-1-mediated plasticity in the orbitofrontal cortex regulates context-dependent action selection. Together with rho subunits, may also control neuronal and glial GABAergic transmission in the cerebellum. This chain is Gamma-aminobutyric acid receptor subunit alpha-1, found in Mus musculus (Mouse).